Consider the following 279-residue polypeptide: Shikimate dehydrogenase (NADP(+)) (279 aa).

Residues 21–23 (SKS) and Thr-68 contribute to the shikimate site. Lys-72 (proton acceptor) is an active-site residue. Glu-84 is an NADP(+) binding site. Residues Asn-93 and Asp-109 each coordinate shikimate. Residues 133 to 137 (GAGGA), 157 to 162 (NRTQAK), and Met-220 each bind NADP(+). Position 222 (Tyr-222) interacts with shikimate. NADP(+) is bound at residue Gly-244.

The protein belongs to the shikimate dehydrogenase family. As to quaternary structure, homodimer.

The enzyme catalyses shikimate + NADP(+) = 3-dehydroshikimate + NADPH + H(+). Its pathway is metabolic intermediate biosynthesis; chorismate biosynthesis; chorismate from D-erythrose 4-phosphate and phosphoenolpyruvate: step 4/7. Involved in the biosynthesis of the chorismate, which leads to the biosynthesis of aromatic amino acids. Catalyzes the reversible NADPH linked reduction of 3-dehydroshikimate (DHSA) to yield shikimate (SA). The protein is Shikimate dehydrogenase (NADP(+)) of Shewanella halifaxensis (strain HAW-EB4).